Here is a 222-residue protein sequence, read N- to C-terminus: GTP cyclohydrolase 1 (222 aa).

3 residues coordinate Zn(2+): C111, H114, and C182.

This sequence belongs to the GTP cyclohydrolase I family. Toroid-shaped homodecamer, composed of two pentamers of five dimers.

The enzyme catalyses GTP + H2O = 7,8-dihydroneopterin 3'-triphosphate + formate + H(+). It functions in the pathway cofactor biosynthesis; 7,8-dihydroneopterin triphosphate biosynthesis; 7,8-dihydroneopterin triphosphate from GTP: step 1/1. This Klebsiella pneumoniae subsp. pneumoniae (strain ATCC 700721 / MGH 78578) protein is GTP cyclohydrolase 1.